Reading from the N-terminus, the 158-residue chain is uncharacterized protein (158 aa).

The signal sequence occupies residues 1-19; the sequence is MQKLLLAVLFFSLLAIATA. The tract at residues 82 to 158 is disordered; the sequence is ANPKAEAEPG…VYENDDENEE (77 aa). Residues 84–107 are compositionally biased toward basic and acidic residues; the sequence is PKAEAEPGSLDKEAGTKGEKEKNG. Residues 141–158 show a composition bias toward acidic residues; the sequence is DDDDDHDDVYENDDENEE.

As to expression, prismatic layer of shell (at protein level). Expressed primarily in the mantle with highest level in the mantle edge and lower level in the mantle pallium.

Its subcellular location is the secreted. This is an uncharacterized protein from Pinctada maxima (Silver-lipped pearl oyster).